Reading from the N-terminus, the 622-residue chain is E3 ubiquitin-protein ligase hrd-1 (622 aa).

Residues 1-23 (MRVSAGLMIGGSCVATAATVLNA) form the signal peptide. At 24-41 (FVINKQFYPSIVYLSKSN) the chain is on the lumenal side. Residues 42 to 62 (ASMAVLYFQGIVLVYLMFQLL) form a helical membrane-spanning segment. Topologically, residues 63–99 (KSILFGDLRAAEAEHLSERTWHAVLETCLAFTVFRDD) are cytoplasmic. Residues 100–120 (FSAMFVMQFIGLLFIKCFHWL) traverse the membrane as a helical segment. Residues 121–141 (ADDRVDMMERSPVITLRFHLR) lie on the Lumenal side of the membrane. Residues 142–162 (MMTVLAALGFADSYFVSSAYF) form a helical membrane-spanning segment. Residues 163-170 (STITKGAS) lie on the Cytoplasmic side of the membrane. A helical membrane pass occupies residues 171–191 (SQIVFGFEYAILLALVLHVTI). Residues 192 to 215 (KYLLHMHDLRNPQSWDNKAVYLLY) lie on the Lumenal side of the membrane. The chain crosses the membrane as a helical span at residues 216–236 (AELLINLIRCVLYGFFAVIML). At 237-622 (RVHTFPLFSV…RFPPPNPEHE (386 aa)) the chain is on the cytoplasmic side. The segment at 292–333 (CIICREEMTVESSPKRLPCSHVFHAHCLRSWFQRQQTCPTCR) adopts an RING-type; atypical zinc-finger fold. Residues 436-445 (MPPPPIPQPN) show a composition bias toward pro residues. 2 disordered regions span residues 436 to 463 (MPPP…PNFD) and 514 to 622 (PVPT…PEHE). The span at 526–538 (ATASSVPTSVPSE) shows a compositional bias: low complexity. Over residues 562 to 577 (FNDTQSTSTPSTSAGP) the composition is skewed to polar residues. A compositionally biased stretch (low complexity) spans 579 to 596 (PSLTPSTSSVPSTSSVRT).

It belongs to the HRD1 family. In terms of assembly, homodimer.

Its subcellular location is the endoplasmic reticulum membrane. The catalysed reaction is S-ubiquitinyl-[E2 ubiquitin-conjugating enzyme]-L-cysteine + [acceptor protein]-L-lysine = [E2 ubiquitin-conjugating enzyme]-L-cysteine + N(6)-ubiquitinyl-[acceptor protein]-L-lysine.. The protein operates within protein modification; protein ubiquitination. In terms of biological role, acts as an E3 ubiquitin-protein ligase which accepts ubiquitin specifically from endoplasmic reticulum-associated ubc-7 E2 ligase and transfers it to substrates, promoting their degradation. Component of the endoplasmic reticulum quality control (ERQC) system, which is also called the ER-associated degradation (ERAD) system, involved in ubiquitin-dependent degradation of misfolded endoplasmic reticulum proteins. Also promotes the degradation of normal but naturally short-lived proteins. Protects cells from ER stress-induced apoptosis. Thought to play a role together with hsp-3 in developmental growth and function of intestinal cells and to play a role together with hsp-4 in gonad formation. The polypeptide is E3 ubiquitin-protein ligase hrd-1 (Caenorhabditis briggsae).